Here is a 565-residue protein sequence, read N- to C-terminus: Formate--tetrahydrofolate ligase (565 aa).

73-80 serves as a coordination point for ATP; sequence TPAGEGKS.

Belongs to the formate--tetrahydrofolate ligase family.

It catalyses the reaction (6S)-5,6,7,8-tetrahydrofolate + formate + ATP = (6R)-10-formyltetrahydrofolate + ADP + phosphate. Its pathway is one-carbon metabolism; tetrahydrofolate interconversion. This is Formate--tetrahydrofolate ligase from Arthrobacter sp. (strain FB24).